The following is a 539-amino-acid chain: MAKELKFSEDARAKMKAGVDKLADTVKTTIGPKGRNVVLEQSYGAPTITNDGVTIAKAIELEDHFENMGAKLVAEVASKTNDIAGDGTTTATVLTQAIVGEGLKNVTAGANPVGIRTGIEKATAAAVAKLHEMSHTVNTKDEIAQIASISAANEEVGELIAEAMDKVGNDGVITIEESKGIETTLDVVEGMQFDRGYMSQYMVTDNDKMEANLDNPYILITDKKIGNIQDILPVLQSVVEQGRALLIIADDITGEALPTLVLNKMRGTFNVVAVKAPGFGDRRKAQLEDIAILTGGTVITEDLGLNLKDVTIDQLGQASKINITKDNTTIVEGSGDKGAVASRVDTIKQQIAETTSDFDREKLQERLAKLAGGVAVINVGAATETELKERKYRIEDALNATRAAVEEGFVAGGGTALVNVIAAVSALSEEGDVQTGINTVIKALESPVRQIAENAGLEGSVIVNKLKEQKEGFGYNAATDEWVDMIAAGIVDPTKVTRSALQNAASVSALLLTTEAVVAEEPKDDAPAAMPQGGMPGMM.

Residues T29 to P32, D86 to T90, G413, N476 to A478, and D492 each bind ATP.

Belongs to the chaperonin (HSP60) family. Forms a cylinder of 14 subunits composed of two heptameric rings stacked back-to-back. Interacts with the co-chaperonin GroES.

It is found in the cytoplasm. The catalysed reaction is ATP + H2O + a folded polypeptide = ADP + phosphate + an unfolded polypeptide.. Together with its co-chaperonin GroES, plays an essential role in assisting protein folding. The GroEL-GroES system forms a nano-cage that allows encapsulation of the non-native substrate proteins and provides a physical environment optimized to promote and accelerate protein folding. The polypeptide is Chaperonin GroEL (Leuconostoc mesenteroides subsp. mesenteroides (strain ATCC 8293 / DSM 20343 / BCRC 11652 / CCM 1803 / JCM 6124 / NCDO 523 / NBRC 100496 / NCIMB 8023 / NCTC 12954 / NRRL B-1118 / 37Y)).